Consider the following 117-residue polypeptide: Large ribosomal subunit protein bL20 (117 aa).

Belongs to the bacterial ribosomal protein bL20 family.

Functionally, binds directly to 23S ribosomal RNA and is necessary for the in vitro assembly process of the 50S ribosomal subunit. It is not involved in the protein synthesizing functions of that subunit. The polypeptide is Large ribosomal subunit protein bL20 (Carboxydothermus hydrogenoformans (strain ATCC BAA-161 / DSM 6008 / Z-2901)).